A 293-amino-acid chain; its full sequence is Neugrin (293 aa).

The first 15 residues, 1–15 (MALSLSLFLGGRVRA), serve as a signal peptide directing secretion. Disordered stretches follow at residues 25–48 (QGVA…PEER) and 162–211 (PLSA…EKNK). Phosphoserine is present on Ser-41. Residue Asn-270 is glycosylated (N-linked (GlcNAc...) asparagine).

The protein belongs to the neugrin family. In terms of assembly, forms a regulatory protein-RNA complex, consisting of RCC1L, NGRN, RPUSD3, RPUSD4, TRUB2, FASTKD2 and 16S mt-rRNA. Interacts with 16S mt-rRNA; this interaction is direct.

Its subcellular location is the nucleus. It localises to the secreted. The protein resides in the mitochondrion membrane. In terms of biological role, plays an essential role in mitochondrial ribosome biogenesis. As a component of a functional protein-RNA module, consisting of RCC1L, NGRN, RPUSD3, RPUSD4, TRUB2, FASTKD2 and 16S mitochondrial ribosomal RNA (16S mt-rRNA), controls 16S mt-rRNA abundance and is required for intra-mitochondrial translation of core subunits of the oxidative phosphorylation system. The sequence is that of Neugrin (Ngrn) from Rattus norvegicus (Rat).